The chain runs to 683 residues: Methionine--tRNA ligase (683 aa).

The short motif at 14-24 (PYANGSIHLGH) is the 'HIGH' region element. Zn(2+)-binding residues include Cys-145, Cys-148, Cys-158, and Cys-161. Residues 331 to 335 (KMSKS) carry the 'KMSKS' region motif. Lys-334 contributes to the ATP binding site. A disordered region spans residues 545 to 572 (ASKEDLTASQTDTGAAAPAGNGELAKDP). One can recognise a tRNA-binding domain in the interval 581 to 683 (TFAAVDLRVA…SGAKPGQRIK (103 aa)).

This sequence belongs to the class-I aminoacyl-tRNA synthetase family. MetG type 1 subfamily. As to quaternary structure, homodimer. Requires Zn(2+) as cofactor.

The protein localises to the cytoplasm. The catalysed reaction is tRNA(Met) + L-methionine + ATP = L-methionyl-tRNA(Met) + AMP + diphosphate. Is required not only for elongation of protein synthesis but also for the initiation of all mRNA translation through initiator tRNA(fMet) aminoacylation. This is Methionine--tRNA ligase from Pseudomonas fluorescens (strain Pf0-1).